The sequence spans 275 residues: MPICTTRDGVEIFYKDWGQGRPVVFIHGWPLNGDAWQDQLKAVVDAGYRGIAHDRRGHGHSTPVWDGYDFDTFADDLNDLLTDLDLRDVTLVAHSMGGGELARYVGRHGTGRLRSAVLLSAIPPVMIKSDKNPDGVPDEVFDALKNGVLTERSQFWKDTAEGFFSANRPGNKVTQGNKDAFWYMAMAQTIEGGVRCVDAFGYTDFTEDLKKFDIPTLVVHGDDDQVVPIDATGRKSAQIIPNAELKVYEGSSHGIAMVPGDKEKFNRDLLEFLNK.

One can recognise an AB hydrolase-1 domain in the interval 22–255 (PVVFIHGWPL…KVYEGSSHGI (234 aa)). Residues Ser95, Asp224, and His253 each act as charge relay system in the active site.

The protein belongs to the AB hydrolase superfamily. Bacterial non-heme haloperoxidase / perhydrolase family. In terms of assembly, homodimer.

With respect to regulation, brominating activity not inhibited by azide, peroxidase activity stimulated by bromide. Functionally, may be a chlorinating enzyme involved in 7-chlorotetracycline biosynthesis. Able to brominate as well. The protein is Non-heme chloroperoxidase CPO-A1 (bpoA1) of Kitasatospora aureofaciens (Streptomyces aureofaciens).